Here is a 224-residue protein sequence, read N- to C-terminus: V-type ATP synthase subunit D (224 aa).

A disordered region spans residues 190 to 224 (REAGYTQKKIKAKIEGKNKEAREAAAATSHGSAAD). The span at 201–212 (AKIEGKNKEARE) shows a compositional bias: basic and acidic residues. Residues 213–224 (AAAATSHGSAAD) are compositionally biased toward low complexity.

Belongs to the V-ATPase D subunit family.

In terms of biological role, produces ATP from ADP in the presence of a proton gradient across the membrane. This is V-type ATP synthase subunit D (atpD) from Deinococcus radiodurans (strain ATCC 13939 / DSM 20539 / JCM 16871 / CCUG 27074 / LMG 4051 / NBRC 15346 / NCIMB 9279 / VKM B-1422 / R1).